Here is a 109-residue protein sequence, read N- to C-terminus: MSGGNDSVLHRPVEAPLMEDGELSAVFTIRNSSGIHVRPAGTIVKLFEGEECEATLTYLGKTVNARSVMSILMLGASYNGEVAVHIKGPSASRVMQKLSEVFNSGFGEL.

In terms of domain architecture, HPr spans 22 to 109 (ELSAVFTIRN…EVFNSGFGEL (88 aa)). The active-site Pros-phosphohistidine intermediate is the His-36.

Belongs to the HPr family.

The protein localises to the cytoplasm. Its function is as follows. General (non sugar-specific) component of the phosphoenolpyruvate-dependent sugar phosphotransferase system (sugar PTS). This major carbohydrate active-transport system catalyzes the phosphorylation of incoming sugar substrates concomitantly with their translocation across the cell membrane. The phosphoryl group from phosphoenolpyruvate (PEP) is transferred to the phosphoryl carrier protein HPr by enzyme I. Phospho-HPr then transfers it to the PTS EIIA domain. The sequence is that of Phosphocarrier protein HPr (ptsH) from Chlamydia trachomatis serovar D (strain ATCC VR-885 / DSM 19411 / UW-3/Cx).